A 664-amino-acid chain; its full sequence is Bifunctional 3-dehydroquinate synthase/phosphatase (664 aa).

Residues 1–352 form a 3-dehydroquinate synthase region; the sequence is MKKIFDDIYV…KIIDKYKNNF (352 aa). NAD(+)-binding positions include 61-66, 95-99, 119-120, Lys132, Lys141, and 159-162; these read DGEEYK, GVICD, TS, and FLKT. Positions 174, 238, and 255 each coordinate Zn(2+). The interval 353–664 is GPPA/PPX; the sequence is LRASIDIGTN…GAILEGVENK (312 aa).

The protein in the N-terminal section; belongs to the sugar phosphate cyclases superfamily. Dehydroquinate synthase family. This sequence in the C-terminal section; belongs to the GppA/Ppx family. Monomer. NAD(+) is required as a cofactor. Co(2+) serves as cofactor. The cofactor is Zn(2+).

The protein resides in the cytoplasm. It carries out the reaction 7-phospho-2-dehydro-3-deoxy-D-arabino-heptonate = 3-dehydroquinate + phosphate. Its pathway is metabolic intermediate biosynthesis; chorismate biosynthesis; chorismate from D-erythrose 4-phosphate and phosphoenolpyruvate: step 2/7. The polypeptide is Bifunctional 3-dehydroquinate synthase/phosphatase (aroB) (Fusobacterium nucleatum subsp. nucleatum (strain ATCC 25586 / DSM 15643 / BCRC 10681 / CIP 101130 / JCM 8532 / KCTC 2640 / LMG 13131 / VPI 4355)).